The chain runs to 652 residues: DNA ligase (652 aa).

NAD(+) contacts are provided by residues 29 to 33 (DSEYD), 78 to 79 (SL), and Glu-107. Lys-109 serves as the catalytic N6-AMP-lysine intermediate. NAD(+) is bound by residues Arg-130, Glu-164, Lys-278, and Lys-302. Residues Cys-395, Cys-398, Cys-413, and Cys-418 each coordinate Zn(2+). Residues 577-652 (VADAALSGLT…VRDEAWLESL (76 aa)) enclose the BRCT domain.

It belongs to the NAD-dependent DNA ligase family. LigA subfamily. The cofactor is Mg(2+). It depends on Mn(2+) as a cofactor.

It carries out the reaction NAD(+) + (deoxyribonucleotide)n-3'-hydroxyl + 5'-phospho-(deoxyribonucleotide)m = (deoxyribonucleotide)n+m + AMP + beta-nicotinamide D-nucleotide.. DNA ligase that catalyzes the formation of phosphodiester linkages between 5'-phosphoryl and 3'-hydroxyl groups in double-stranded DNA using NAD as a coenzyme and as the energy source for the reaction. It is essential for DNA replication and repair of damaged DNA. The chain is DNA ligase from Streptococcus pneumoniae (strain Taiwan19F-14).